Here is a 129-residue protein sequence, read N- to C-terminus: Large ribosomal subunit protein bL17 (129 aa).

The protein belongs to the bacterial ribosomal protein bL17 family. As to quaternary structure, part of the 50S ribosomal subunit. Contacts protein L32.

The protein is Large ribosomal subunit protein bL17 of Pasteurella multocida (strain Pm70).